The sequence spans 82 residues: 4-(gamma-L-glutamylamino)butanoyl-[BtrI acyl-carrier protein] monooxygenase BtrO (82 aa).

As to quaternary structure, homotetramer.

It carries out the reaction 4-(gamma-L-glutamylamino)butanoyl-[BtrI ACP] + FMNH2 + O2 = 4-(gamma-L-glutamylamino)-(2S)-2-hydroxybutanoyl-[BtrI ACP] + FMN + H2O + H(+). It participates in antibiotic biosynthesis; butirosin biosynthesis. In terms of biological role, NAD(P)H:FMN oxidoreductase component of a two-component system involved in the biosynthesis of the side chain of the aminoglycoside antibiotics in the biosynthetic pathway of butirosin. Together with BtrO, mediates hydroxylation of gamma-L-Glu-GABA-S-BtrI. In Niallia circulans (Bacillus circulans), this protein is 4-(gamma-L-glutamylamino)butanoyl-[BtrI acyl-carrier protein] monooxygenase BtrO (btrV).